We begin with the raw amino-acid sequence, 650 residues long: L-aspartate N-monooxygenase (nitrosuccinate-forming) (650 aa).

This sequence belongs to the nitrosuccinic acid synthase family. Requires FAD as cofactor.

It carries out the reaction L-aspartate + 3 NADPH + 3 O2 + 2 H(+) = 2-nitrobutanedioate + 3 NADP(+) + 4 H2O. Its function is as follows. Involved in the biosynthesis of desferrioxamine derivatives which have iron-binding properties and may act as siderophores. Catalyzes the iterative oxidation of L-aspartic acid to nitrosuccinic acid (2-nitrobutanedioate) via N-hydroxyaspartic acid and nitrososuccinic acid. The sequence is that of L-aspartate N-monooxygenase (nitrosuccinate-forming) from Streptomyces davaonensis (strain DSM 101723 / JCM 4913 / KCC S-0913 / 768).